The chain runs to 304 residues: uncharacterized protein (304 aa).

This is an uncharacterized protein from Methanocaldococcus jannaschii (strain ATCC 43067 / DSM 2661 / JAL-1 / JCM 10045 / NBRC 100440) (Methanococcus jannaschii).